A 1066-amino-acid polypeptide reads, in one-letter code: Ubiquitin conjugation factor E4 A (1066 aa).

Residues 35–57 are disordered; the sequence is QLKQQSDELPASPDDSDNSVSES. K386 is modified (N6-acetyllysine). A U-box domain is found at 987–1061; it reads DACDEFLDPI…QRWLAERKQQ (75 aa).

The protein belongs to the ubiquitin conjugation factor E4 family.

The protein resides in the cytoplasm. It catalyses the reaction S-ubiquitinyl-[E2 ubiquitin-conjugating enzyme]-L-cysteine + [acceptor protein]-L-lysine = [E2 ubiquitin-conjugating enzyme]-L-cysteine + N(6)-ubiquitinyl-[acceptor protein]-L-lysine.. Its pathway is protein modification; protein ubiquitination. Ubiquitin-protein ligase that probably functions as an E3 ligase in conjunction with specific E1 and E2 ligases. May also function as an E4 ligase mediating the assembly of polyubiquitin chains on substrates ubiquitinated by another E3 ubiquitin ligase. Mediates 'Lys-48'-linked polyubiquitination of substrates. The chain is Ubiquitin conjugation factor E4 A from Rattus norvegicus (Rat).